Here is a 414-residue protein sequence, read N- to C-terminus: Esterase FrsA (414 aa).

Belongs to the FrsA family.

The catalysed reaction is a carboxylic ester + H2O = an alcohol + a carboxylate + H(+). Its function is as follows. Catalyzes the hydrolysis of esters. This is Esterase FrsA from Escherichia coli O45:K1 (strain S88 / ExPEC).